A 200-amino-acid polypeptide reads, in one-letter code: Phosphoheptose isomerase (200 aa).

The 163-residue stretch at 37–199 folds into the SIS domain; it reads VLGCITAGGK…DVQLLGEQDL (163 aa). 52–54 serves as a coordination point for substrate; the sequence is NGG. Zn(2+)-binding residues include H61 and E65. Substrate contacts are provided by residues E65, 94 to 95, 120 to 122, S125, and Q175; these read ND and TTS. Zn(2+)-binding residues include Q175 and H183.

Belongs to the SIS family. GmhA subfamily. In terms of assembly, homotetramer. Zn(2+) is required as a cofactor.

The protein resides in the cytoplasm. It catalyses the reaction 2 D-sedoheptulose 7-phosphate = D-glycero-alpha-D-manno-heptose 7-phosphate + D-glycero-beta-D-manno-heptose 7-phosphate. It participates in carbohydrate biosynthesis; D-glycero-D-manno-heptose 7-phosphate biosynthesis; D-glycero-alpha-D-manno-heptose 7-phosphate and D-glycero-beta-D-manno-heptose 7-phosphate from sedoheptulose 7-phosphate: step 1/1. Its function is as follows. Catalyzes the isomerization of sedoheptulose 7-phosphate in D-glycero-D-manno-heptose 7-phosphate. The sequence is that of Phosphoheptose isomerase from Methylibium petroleiphilum (strain ATCC BAA-1232 / LMG 22953 / PM1).